The primary structure comprises 463 residues: uncharacterized protein (463 aa).

The next 12 membrane-spanning stretches (helical) occupy residues 17–37 (ISLMSLGAAIGVGLFLGSASA), 40–60 (LAGPGILVAYAASGLVMFFIM), 97–117 (WFLWVVTCMAEITAVGIYMGF), 122–142 (VPNWIWALSALVIMTGVNFLA), 153–173 (FALIKIVAILSMIAVGLLMII), 201–221 (GVLLSLQMVMFAYLGIEMIGV), 244–264 (ILIFYVGALFVIMSIYPWQEI), 278–298 (VGIPSAAGIINFVVLTAALSS), 335–355 (AVLASAGALLVGVLLNYVVPA), 357–377 (VFTWVTSIATFGAIWTWAIIL), 401–421 (LFPFTSYVSLAFLAFVVILMA), and 429–449 (AVIIGPIWFLILLAVYYGKGF).

Belongs to the amino acid-polyamine-organocation (APC) superfamily.

It is found in the cell membrane. This is an uncharacterized protein from Bacillus subtilis (strain 168).